Reading from the N-terminus, the 360-residue chain is DNA replication and repair protein RecF (360 aa).

30-37 (GQNGSGKT) contacts ATP.

The protein belongs to the RecF family.

Its subcellular location is the cytoplasm. Functionally, the RecF protein is involved in DNA metabolism; it is required for DNA replication and normal SOS inducibility. RecF binds preferentially to single-stranded, linear DNA. It also seems to bind ATP. This Shewanella sp. (strain MR-7) protein is DNA replication and repair protein RecF.